We begin with the raw amino-acid sequence, 1471 residues long: ABC multidrug transporter F (1471 aa).

Polar residues predominate over residues 1–19; that stretch reads MALNSTDNRWSTGEDTPSE. The interval 1-40 is disordered; it reads MALNSTDNRWSTGEDTPSEAQLPDGEERLDAAPDEKVTAE. N-linked (GlcNAc...) asparagine glycosylation occurs at Asn-4. The span at 25–40 shows a compositional bias: basic and acidic residues; sequence GEERLDAAPDEKVTAE. 2 N-linked (GlcNAc...) asparagine glycosylation sites follow: Asn-71 and Asn-311. The 255-residue stretch at 133 to 387 folds into the ABC transporter 1 domain; that stretch reads LKVPTMVRQA…FEQLGFQCPE (255 aa). Residues 498–518 traverse the membrane as a helical segment; that stretch reads VTLAMLIGNFFEALIIASIFY. Asn-519 is a glycosylation site (N-linked (GlcNAc...) asparagine). 5 helical membrane-spanning segments follow: residues 532-552, 578-598, 607-627, 641-661, and 751-771; these read ALLFMMVLLNAFASVLEILTL, FIMSLPYKFVNSSLVNLTLYF, GPFFFFLLISTSMMLAMSMFF, LAPSSIILLALVLYTGFTIPV, and IIIAMTVFLAVCHFVTTELVA. A disordered region spans residues 791 to 819; that stretch reads RAKQGQRDEEQPSASAVPSEKYSEAPTPV. Residues 829 to 1071 form the ABC transporter 2 domain; sequence FHWEDVCYDV…TLMDYFVRNG (243 aa). A glycan (N-linked (GlcNAc...) asparagine) is linked at Asn-842. 865–872 contacts ATP; that stretch reads GVSGAGKT. 5 helical membrane passes run 1167–1187, 1201–1221, 1252–1272, 1288–1308, and 1326–1346; these read YLYSKAILTVGSSIFIGFSFF, FGVFVFLFVVIQLIFQIIPTF, FAWNTIAAVLCFLAWFYPVGL, LVFLIIWATFLFASSFAHLLI, and IMMYAFCGILAGPHALPGFWI. 3 N-linked (GlcNAc...) asparagine glycosylation sites follow: Asn-1386, Asn-1422, and Asn-1429. A helical transmembrane segment spans residues 1441–1461; it reads FGLLWVYVAVNTFGAVFLYWL.

This sequence belongs to the ABC transporter superfamily. ABCG family. PDR (TC 3.A.1.205) subfamily.

Its subcellular location is the cell membrane. The enzyme catalyses fluconazole(in) + ATP + H2O = fluconazole(out) + ADP + phosphate + H(+). It carries out the reaction itraconazole(in) + ATP + H2O = itraconazole(out) + ADP + phosphate + H(+). Its activity is regulated as follows. The efflux inhibitor FK506 impairs the transport activity. In terms of biological role, pleiotropic ABC efflux transporter that shows a strong substrate specificity for the azole class of drugs such as lotrimazole (CLT), fluconazole (FLC), itraconazole (ITC), ketoconazole (KTC), posaconazole (POS), econazole (ECON), metconazole (MET), miconazole (MCZ), prochloraz (PCLZ), and tebuconazole (TEBZ). The protein is ABC multidrug transporter F of Aspergillus fumigatus (strain ATCC MYA-4609 / CBS 101355 / FGSC A1100 / Af293) (Neosartorya fumigata).